Reading from the N-terminus, the 79-residue chain is Putative defensin-like protein 146 (79 aa).

The signal sequence occupies residues Met1–Gly25. 4 disulfides stabilise this stretch: Cys35–Cys78, Cys46–Cys66, Cys51–Cys72, and Cys55–Cys74.

This sequence belongs to the DEFL family.

The protein resides in the secreted. The chain is Putative defensin-like protein 146 (LCR9) from Arabidopsis thaliana (Mouse-ear cress).